A 245-amino-acid chain; its full sequence is MCGLRFIMGPVRLEILLFILAAYGAWAEATKEEEDDTERLPSKCEVCKLLSMELQEALSRTGRSREVLELGQVLDTGKRKRHVPYSLSETRLEEALENLCERILDYNVHAERKGSLRYAKGQSQTMATLKGLVQKGVKVDLGIPLELWDEPSVEVTFLKKQCETMLEEFEDVVGDWYFHHQEQPLQHFLCERHVLPASETACLREAWTGKEKISDGQEEADDEEEEEEEEITKTSGNPKHDPEDL.

An N-terminal signal peptide occupies residues 1–27 (MCGLRFIMGPVRLEILLFILAAYGAWA). Cystine bridges form between Cys-44–Cys-202, Cys-47–Cys-190, and Cys-100–Cys-162. Residues 207 to 245 (WTGKEKISDGQEEADDEEEEEEEEITKTSGNPKHDPEDL) are disordered. Residues 209–237 (GKEKISDGQEEADDEEEEEEEEITKTSGN) adopt a coiled-coil conformation. Acidic residues predominate over residues 216–230 (GQEEADDEEEEEEEE).

The protein belongs to the canopy family. As to quaternary structure, interacts with TLR4. Highly expressed in lung, spleen, thymus, and uterus. Moderately expressed in kidney, stomach and placenta. Weakly expressed in brain, heart, liver, small intestine, skeletal muscle and testis.

It localises to the secreted. Functionally, plays a role in the regulation of the cell surface expression of TLR4. The polypeptide is Protein canopy homolog 4 (Cnpy4) (Mus musculus (Mouse)).